The chain runs to 201 residues: 3-isopropylmalate dehydratase small subunit (201 aa).

This sequence belongs to the LeuD family. LeuD type 1 subfamily. As to quaternary structure, heterodimer of LeuC and LeuD.

The enzyme catalyses (2R,3S)-3-isopropylmalate = (2S)-2-isopropylmalate. It functions in the pathway amino-acid biosynthesis; L-leucine biosynthesis; L-leucine from 3-methyl-2-oxobutanoate: step 2/4. In terms of biological role, catalyzes the isomerization between 2-isopropylmalate and 3-isopropylmalate, via the formation of 2-isopropylmaleate. The protein is 3-isopropylmalate dehydratase small subunit of Escherichia fergusonii (strain ATCC 35469 / DSM 13698 / CCUG 18766 / IAM 14443 / JCM 21226 / LMG 7866 / NBRC 102419 / NCTC 12128 / CDC 0568-73).